A 313-amino-acid polypeptide reads, in one-letter code: Aspartate carbamoyltransferase catalytic subunit (313 aa).

Residues R58 and T59 each contribute to the carbamoyl phosphate site. K86 is a binding site for L-aspartate. Residues R108, H136, and Q139 each coordinate carbamoyl phosphate. The L-aspartate site is built by R169 and R223. 2 residues coordinate carbamoyl phosphate: G265 and P266.

This sequence belongs to the aspartate/ornithine carbamoyltransferase superfamily. ATCase family. Heterododecamer (2C3:3R2) of six catalytic PyrB chains organized as two trimers (C3), and six regulatory PyrI chains organized as three dimers (R2).

The enzyme catalyses carbamoyl phosphate + L-aspartate = N-carbamoyl-L-aspartate + phosphate + H(+). It functions in the pathway pyrimidine metabolism; UMP biosynthesis via de novo pathway; (S)-dihydroorotate from bicarbonate: step 2/3. Its function is as follows. Catalyzes the condensation of carbamoyl phosphate and aspartate to form carbamoyl aspartate and inorganic phosphate, the committed step in the de novo pyrimidine nucleotide biosynthesis pathway. This chain is Aspartate carbamoyltransferase catalytic subunit, found in Anaeromyxobacter sp. (strain K).